Reading from the N-terminus, the 120-residue chain is NAD(P)H-quinone oxidoreductase subunit 3, chloroplastic (120 aa).

3 consecutive transmembrane segments (helical) span residues 9 to 29, 64 to 84, and 88 to 108; these read IFWAFLIISSLIPILAFFISG, MFALVFVVFDVETVFLYPWAM, and VLGLSVFLEAFVFVLILIVGL.

This sequence belongs to the complex I subunit 3 family. As to quaternary structure, NDH is composed of at least 16 different subunits, 5 of which are encoded in the nucleus.

The protein resides in the plastid. Its subcellular location is the chloroplast thylakoid membrane. The enzyme catalyses a plastoquinone + NADH + (n+1) H(+)(in) = a plastoquinol + NAD(+) + n H(+)(out). It carries out the reaction a plastoquinone + NADPH + (n+1) H(+)(in) = a plastoquinol + NADP(+) + n H(+)(out). In terms of biological role, NDH shuttles electrons from NAD(P)H:plastoquinone, via FMN and iron-sulfur (Fe-S) centers, to quinones in the photosynthetic chain and possibly in a chloroplast respiratory chain. The immediate electron acceptor for the enzyme in this species is believed to be plastoquinone. Couples the redox reaction to proton translocation, and thus conserves the redox energy in a proton gradient. The polypeptide is NAD(P)H-quinone oxidoreductase subunit 3, chloroplastic (Jasminum nudiflorum (Winter jasmine)).